The primary structure comprises 366 residues: DNA replication and repair protein RecF (366 aa).

30 to 37 (GRNAQGKT) is an ATP binding site.

Belongs to the RecF family.

It localises to the cytoplasm. In terms of biological role, the RecF protein is involved in DNA metabolism; it is required for DNA replication and normal SOS inducibility. RecF binds preferentially to single-stranded, linear DNA. It also seems to bind ATP. This is DNA replication and repair protein RecF from Streptococcus thermophilus (strain ATCC BAA-250 / LMG 18311).